The sequence spans 509 residues: ATP synthase subunit alpha (509 aa).

Residue 169 to 176 participates in ATP binding; sequence GDRQTGKT.

It belongs to the ATPase alpha/beta chains family. F-type ATPases have 2 components, CF(1) - the catalytic core - and CF(0) - the membrane proton channel. CF(1) has five subunits: alpha(3), beta(3), gamma(1), delta(1), epsilon(1). CF(0) has three main subunits: a(1), b(2) and c(9-12). The alpha and beta chains form an alternating ring which encloses part of the gamma chain. CF(1) is attached to CF(0) by a central stalk formed by the gamma and epsilon chains, while a peripheral stalk is formed by the delta and b chains.

Its subcellular location is the cell inner membrane. It catalyses the reaction ATP + H2O + 4 H(+)(in) = ADP + phosphate + 5 H(+)(out). Functionally, produces ATP from ADP in the presence of a proton gradient across the membrane. The alpha chain is a regulatory subunit. The chain is ATP synthase subunit alpha from Novosphingobium aromaticivorans (strain ATCC 700278 / DSM 12444 / CCUG 56034 / CIP 105152 / NBRC 16084 / F199).